The sequence spans 177 residues: FMRFamide-related peptides (177 aa).

An N-terminal signal peptide occupies residues 1 to 21 (MNHPRSIAMLAALWLVVSVTS). A propeptide spanning residues 22-32 (TPVRRSPDLEA) is cleaved from the precursor. F45 is subject to Phenylalanine amide. Positions 47–93 (RSTLPVVPPAQPSFLQRYSAPQPAALTADDLMTFLRAYEEDYSSPVS) are excised as a propeptide. 2 positions are modified to phenylalanine amide: F102 and F111. Residues 113–131 (RSVDEENSGYQAETNTYPQ) constitute a propeptide that is removed on maturation. Residue L143 is modified to Leucine amide. A propeptide spanning residues 145–177 (RDNELSESNDEDRYEVESERTKRSVVDPCNDCA) is cleaved from the precursor. The tract at residues 145 to 177 (RDNELSESNDEDRYEVESERTKRSVVDPCNDCA) is disordered. Over residues 149 to 158 (LSESNDEDRY) the composition is skewed to acidic residues. Residues 159-169 (EVESERTKRSV) are compositionally biased toward basic and acidic residues.

The protein belongs to the FARP (FMRFamide related peptide) family. Only expressed in the CNS and predominantly in the thoracic ganglia. Strongest expression is seen in two pairs of large neurons in each thoracic ganglion. These neurons are ventrolateral neurosecretory cells 1 and 2, they project their axons through transverse nerves into the periphery where axons from the prothoracic ganglion innervate the prothoracic gland.

Its subcellular location is the secreted. In terms of biological role, regulates ecdysteroidogenesis by direct innervation of the prothoracic gland by reducing cAMP production via the receptor for myosuppressin. The neurons that innervate the prothoracic gland during the fifth instar are most active during days 0-4, after which they reduce and then peak again on day 6. Expression suppresses the biosynthesis of steroid hormones called ecdysteroids that elicit molting and metamorphosis. In Bombyx mori (Silk moth), this protein is FMRFamide-related peptides.